The chain runs to 251 residues: Lactose phosphotransferase system repressor (251 aa).

The region spanning 3–58 is the HTH deoR-type domain; sequence KHERLDEIAKLVNKKGTIRTNEIVEGLNVSDMTVRRDLIELENKGILTKIHGGARS. The H-T-H motif DNA-binding region spans 20–39; sequence IRTNEIVEGLNVSDMTVRRD.

Its function is as follows. Repressor of the lactose catabolism operon. Galactose-6-phosphate is the inducer. The sequence is that of Lactose phosphotransferase system repressor (lacR) from Staphylococcus aureus (strain MRSA252).